Reading from the N-terminus, the 139-residue chain is MDIREIQAALPHRYPMLLVDRVLEVSDDHIVAIKNVTINEPFFNGHFPHYPVMPGVLIMEALAQTAGVLELSKEENKGKLVFYAGMDKVKFKKQVVPGDQLVMTATFIKRRGTIAVVEARAEVDGKLAASGTLTFACGQ.

The active site involves His46.

Belongs to the thioester dehydratase family. FabZ subfamily.

It localises to the cytoplasm. The catalysed reaction is a (3R)-hydroxyacyl-[ACP] = a (2E)-enoyl-[ACP] + H2O. In terms of biological role, involved in unsaturated fatty acids biosynthesis. Catalyzes the dehydration of short chain beta-hydroxyacyl-ACPs and long chain saturated and unsaturated beta-hydroxyacyl-ACPs. The protein is 3-hydroxyacyl-[acyl-carrier-protein] dehydratase FabZ of Streptococcus pyogenes serotype M1.